A 105-amino-acid polypeptide reads, in one-letter code: Structural protein 11 (105 aa).

The stretch at 59–97 (NLIKSIQRARDVSEGEARELKDDMVTELEKAETKEERRD) forms a coiled coil.

Its subcellular location is the virion. In His1 virus (isolate Australia/Victoria) (His1V), this protein is Structural protein 11.